The sequence spans 2046 residues: MIRVLGLLWDPLSSWVEVSGPIILFGLYYGFIATLPFGPSKIYSMRSFFLGETLYGIIAISGSITGQLIVFLSMYYSPIYAALWKPHAITLLVIPYTFCRVFRSLEKPSSPESTHPMNSIKNPKILSLFMGGLILQLLNPILLANPVLTRLVNLFLFRYSDNISFMISSFCGWLGGHILFINLTKLVSLRLVSFRIERNSPIDHTSLRRYIHQTFSVLLISYFSFYLGRSPLIFHRKKKDNKKKDRSAAMAKKDRSVAMAKKNCSVAMVKKDRSVAEDEDRSVAMAKKGRSVAEDEDRSEPLAMVMVQEARSVSFIAKKARSVAEDKDPEDEHRSVAMAKKARSVAEDKDPEDEHRSVAMAKKDRSVAEDEDRSVAMAKKDRSVAEDEDRSVAEDEDRSVAEDEDRSVAEDEDRSVAEDEDRSVAEDEDRFVAEDEDRSVAEDEDRSVAEDEDRSVAEDEDPEDEDRSVPREQKKLKGLPISWFKQPCPIKFFDPDRIYQPIRYIGNSPFHCLKPVMRTEVSQYFFGAYSSDGKKRISFTLLPSVLALGEKLGKYRDLLDTSCLSEDPYHRWNHTMKRRRDSLENEFSDRVKALSHGSPAENVIERRVKFSNSQGDSFTEMYDPLLNGALRGTIDQFESPKMLNDLIISIISNLSDFIEIPIKDCKEGFPNDQFGYGYHISEHWQELEHKSFRLPWEPLPTDTFRSLVPSTKSSRRGKVEPISKRLYPLAERIIPNKAKKIFEEYLSNIDSSFGKLIYPKDLLEMQIQEIYTKDDDSLIHFLWLEIAFRVAYMDLAPEIASCNERIYTNSLVNIYNRIDGRNVAPTGTVKWELILSLFTTKQIFLFESLAQHEWTILRNCRGNVSTDDSTQTKDFIDLYGKILLNEPLQFREIKKHLPRWPSDLMRAERDGDGDDRGPIQISTSRIRTRKVKSKLTLDFGKERIVLKRYHAESDYRRSLIRGSMRAKRRKIMIWKRVQPNVHSLFFLRRMEIPTYPKDYYDTFDSGRVNQEQIQKEVREKIHRGKYLDPVLHNTTLAEQVCLAWPEVHYFRGLILVAQSNIRKNIILPSLIIAKNIGRILLFKAPEFAQDWEEMKEELHIKCGSDGTEFSKKGFPDKWYKYGMQIKLIFPFRLKPWHSQSKKRLRLRWSYLTTLGFETDIPFGDPKPKLGIFSEFFQPIFKKVKKGLKKGLKKGLKKGLKRELILFKKVKRRLMGSTGIRRVSRVRYIDKSELNDRIQNKLLSETETTPMGSANDSSEVNDQFGYETQTINVKDPDDWTTTMKERIESIAIINSSPITGMSLMDSEIHTGSKGSFNILGSTLKKRLVQIRRIPGRFRNKSVQLIRKRFYSMKLMKLFLKRMDRYLLLSVIHFIGSNIKFWIRSAWIRSTGNIATIYGRIFIINNDISKINRGKITNYYSINEKRKDFEIRPDRNMLSMSQAYVFHKIWQIGAIDRSYSKYFLKYRAQTSYPLIKKKIKELLDIQRILDHEKPQDLKENDWKQWLRCFDRYKLSPQIWSRINPQKWRNRVNKQCTCYEERFIPYEKKKDYIFATVIEPSLGLLRKMNKRYRYDLLSYSYLNSTKELDILNLTKDSDILNLTKDSDILNLTKDSDILNLTKDSDILNLTKDSDTLKIEKRRSGLDLKFWLFPELSGKENIYDNSKFIPGYSILSEAQERKKIEEKEREERIKVIEERIGIIRSDVQNKKVEEKQTGTGEVEEKQTGKVKQKQFGLKVEDQKTDGKKKTNQVLVQHKILKDIGEEDISDLAGMCRILIEIEDPTKFMQIYEENINLNLMFLIIYEDLKGYEKYINARDSNANDINANDINANDINAKDSNANDINAKDSNANDINANDSNAKDSNANDINAKDINAKDSNANDINAKDSNADVPKKKEDEIPKTVVSSEPYRLSSIVNDNLLIYKIVSMWLKSEKIKRAGLGDDKNILSSFNLEDILLPKRRREFRILNRFDLENDHVGFFNGKSIQNDEELMGRDQHLSVDTTQRIKRFLWPSYRLEDLLCMNRYWFNTNDGSRSAMLRIRMYPLNVN.

6 consecutive transmembrane segments (helical) span residues 18-38 (VSGPIILFGLYYGFIATLPFG), 54-74 (LYGIIAISGSITGQLIVFLSM), 79-99 (IYAALWKPHAITLLVIPYTFC), 125-145 (ILSLFMGGLILQLLNPILLAN), 163-183 (ISFMISSFCGWLGGHILFINL), and 214-234 (TFSVLLISYFSFYLGRSPLIF). 3 disordered regions span residues 278–299 (DEDRSVAMAKKGRSVAEDEDRS), 320–472 (ARSV…VPRE), and 1833–1898 (AKDS…EDEI). Basic and acidic residues-rich tracts occupy residues 322–335 (SVAEDKDPEDEHRS), 344–368 (SVAEDKDPEDEHRSVAMAKKDRSVA), and 378–457 (AKKD…RSVA). Residues 1833–1866 (AKDSNANDINAKDSNANDINANDSNAKDSNANDI) show a composition bias toward low complexity. Over residues 1882 to 1898 (NAKDSNADVPKKKEDEI) the composition is skewed to basic and acidic residues.

Belongs to the TIC214 family. In terms of assembly, part of the Tic complex.

The protein resides in the plastid. It is found in the chloroplast inner membrane. Involved in protein precursor import into chloroplasts. May be part of an intermediate translocation complex acting as a protein-conducting channel at the inner envelope. In Pinus koraiensis (Korean pine), this protein is Protein TIC 214.